The sequence spans 251 residues: Tungstate/molybdate/chromate-binding protein ModA (251 aa).

A signal peptide spans 1 to 23 (MTTRLPQLLLALLASAVSLAASA). Residues Thr60 and Ile168 each contribute to the molybdate site.

This sequence belongs to the bacterial solute-binding protein ModA family. In terms of assembly, the complex is composed of two ATP-binding proteins (ModC), two transmembrane proteins (ModB) and a solute-binding protein (ModA).

Its subcellular location is the periplasm. Functionally, part of the ABC transporter complex ModABC involved in the transport of molybdenum into the cell. Binds tungstate and molybdate. Can also bind chromate, with lower affinity. Plays an essential role in recruitment of molybdate for nitrate reduction. In Pseudomonas aeruginosa (strain ATCC 15692 / DSM 22644 / CIP 104116 / JCM 14847 / LMG 12228 / 1C / PRS 101 / PAO1), this protein is Tungstate/molybdate/chromate-binding protein ModA.